The following is a 433-amino-acid chain: MQRMIQQFAAEYTSKTSSTQDPSQPNSTKNQSLPKASPVTTSPTAATTQNPVLSKLLMADQDSPLDLTVRKSQSEPSEQDGVLDLSTKKSPCASSTSLSHSPGCSSTQGNGRPGRPSQYRPDGLRSGDGVPPRSLQDGTREGFGHSTSLKVPLARSLQISEELLSRNQLSTAASLGPSGLQNHGQHLILSREASWAKPHYEFSLSRMKFRGNGALSNISDLPFLAENSAFPKMAHQTKQDGKRDMSHSSPVDLKIPQVRGMDLSWESRTGDQYSYSSLVMGSQTESALSKKLRAILPKQNRKSMLDAGPDSWGSDAEQSTSGQPYPTSDQEGDPGSKQPRKKRGRYRQYNSEILEEAISVVMSGKMSVSKAQSIYGIPHSTLEYKVKERLGTLKNPPKKKMKLMRSEGPDVSVKIELDPQGEAAQSANESKTE.

Positions 1-147 (MQRMIQQFAA…GTREGFGHST (147 aa)) are disordered. Over residues 13-34 (TSKTSSTQDPSQPNSTKNQSLP) the composition is skewed to polar residues. Residues 36-48 (ASPVTTSPTAATT) are compositionally biased toward low complexity. Ser-42 is modified (phosphoserine). The Interaction with nuclear receptors motif lies at 53–57 (LSKLL). Phosphoserine is present on Ser-63. Over residues 88–110 (KKSPCASSTSLSHSPGCSSTQGN) the composition is skewed to polar residues. Ser-249 carries the post-translational modification Phosphoserine. Lys-254 participates in a covalent cross-link: Glycyl lysine isopeptide (Lys-Gly) (interchain with G-Cter in SUMO2). The interval 299–348 (QNRKSMLDAGPDSWGSDAEQSTSGQPYPTSDQEGDPGSKQPRKKRGRYRQ) is disordered. Polar residues predominate over residues 316–329 (AEQSTSGQPYPTSD). Residues 339-345 (PRKKRGR) carry the Nuclear localization signal motif. Residues 340 to 392 (RKKRGRYRQYNSEILEEAISVVMSGKMSVSKAQSIYGIPHSTLEYKVKERLGT) form the HTH psq-type domain. The H-T-H motif DNA-binding region spans 368–388 (VSKAQSIYGIPHSTLEYKVKE). The segment at 393–412 (LKNPPKKKMKLMRSEGPDVS) is disordered. Lys-414 is covalently cross-linked (Glycyl lysine isopeptide (Lys-Gly) (interchain with G-Cter in SUMO2)).

As to quaternary structure, interacts with ESR1 and ESR2 in the presence of estradiol. Interacts with CTBP1, HDAC3 and HDAC6. Component of a large corepressor complex that contains about 20 proteins, including CTBP1, CTBP2, HDAC1 and HDAC2. As to expression, detected in heart and kidney.

The protein resides in the nucleus. Its function is as follows. Repressor of ligand-dependent transcription activation by various nuclear repressors. Repressor of ligand-dependent transcription activation by ESR1, ESR2, NR3C1, PGR, RARA, RARB, RARG, RXRA and VDR. May act as transcription activator that binds DNA elements with the sequence 5'-CCCTATCGATCGATCTCTACCT-3'. In Mus musculus (Mouse), this protein is Ligand-dependent corepressor (Lcor).